The following is a 230-amino-acid chain: Thymidylate kinase (230 aa).

Residue 20–27 coordinates ATP; sequence GGEGSGKS.

This sequence belongs to the thymidylate kinase family.

The catalysed reaction is dTMP + ATP = dTDP + ADP. Its function is as follows. Phosphorylation of dTMP to form dTDP in both de novo and salvage pathways of dTTP synthesis. The protein is Thymidylate kinase of Nitrobacter winogradskyi (strain ATCC 25391 / DSM 10237 / CIP 104748 / NCIMB 11846 / Nb-255).